The primary structure comprises 122 residues: Large ribosomal subunit protein uL14 (122 aa).

It belongs to the universal ribosomal protein uL14 family. As to quaternary structure, part of the 50S ribosomal subunit. Forms a cluster with proteins L3 and L19. In the 70S ribosome, L14 and L19 interact and together make contacts with the 16S rRNA in bridges B5 and B8.

Binds to 23S rRNA. Forms part of two intersubunit bridges in the 70S ribosome. The chain is Large ribosomal subunit protein uL14 from Latilactobacillus sakei subsp. sakei (strain 23K) (Lactobacillus sakei subsp. sakei).